The chain runs to 246 residues: Trypsin V-A (246 aa).

Residues 1-15 (MKICIFFTLLGTVAA) form the signal peptide. Residues 16-24 (FPTEDNDDR) constitute a propeptide, activation peptide. Positions 25–244 (IVGGYTCQEH…YLNWIHQTIA (220 aa)) constitute a Peptidase S1 domain. Intrachain disulfides connect Cys-31–Cys-160, Cys-49–Cys-65, Cys-133–Cys-233, Cys-140–Cys-206, Cys-171–Cys-185, and Cys-196–Cys-220. The active-site Charge relay system is the His-64. Ca(2+) is bound by residues Glu-76, Asn-78, and Glu-86. The active-site Charge relay system is Asp-108. Ser-200 serves as the catalytic Charge relay system.

It belongs to the peptidase S1 family. Ca(2+) serves as cofactor.

The protein resides in the secreted. Its subcellular location is the extracellular space. It carries out the reaction Preferential cleavage: Arg-|-Xaa, Lys-|-Xaa.. In Rattus norvegicus (Rat), this protein is Trypsin V-A.